We begin with the raw amino-acid sequence, 695 residues long: Threonine--tRNA ligase (695 aa).

The region spanning 1-66 (MSAPARPAPA…DTDVEVTPVA (66 aa)) is the TGS domain. Positions 263 to 569 (DHRKLGVELD…LTEHYAGAFP (307 aa)) are catalytic. Zn(2+) is bound by residues cysteine 368, histidine 419, and histidine 546.

Belongs to the class-II aminoacyl-tRNA synthetase family. In terms of assembly, homodimer. The cofactor is Zn(2+).

It is found in the cytoplasm. It catalyses the reaction tRNA(Thr) + L-threonine + ATP = L-threonyl-tRNA(Thr) + AMP + diphosphate + H(+). Its function is as follows. Catalyzes the attachment of threonine to tRNA(Thr) in a two-step reaction: L-threonine is first activated by ATP to form Thr-AMP and then transferred to the acceptor end of tRNA(Thr). Also edits incorrectly charged L-seryl-tRNA(Thr). In Mycolicibacterium gilvum (strain PYR-GCK) (Mycobacterium gilvum (strain PYR-GCK)), this protein is Threonine--tRNA ligase.